The following is a 65-amino-acid chain: Neurotoxin Bot2 (65 aa).

The 63-residue stretch at 2–64 folds into the LCN-type CS-alpha/beta domain; sequence RDAYIAQPEN…VPIRIEGKCH (63 aa). 4 cysteine pairs are disulfide-bonded: C12-C63, C16-C36, C22-C46, and C26-C48. F65 is subject to Phenylalanine amide.

It belongs to the long (4 C-C) scorpion toxin superfamily. Sodium channel inhibitor family. Alpha subfamily. In terms of tissue distribution, expressed by the venom gland.

The protein resides in the secreted. In terms of biological role, binds to sodium channels (Nav) and inhibits the inactivation of the activated channels, thereby blocking neuronal transmission. The polypeptide is Neurotoxin Bot2 (Buthus occitanus tunetanus (Common European scorpion)).